A 417-amino-acid chain; its full sequence is Tyrosine--tRNA ligase (417 aa).

An L-tyrosine-binding site is contributed by Y35. A 'HIGH' region motif is present at residues 40–49; that stretch reads ATAGSLTVGH. Residues Y165 and Q169 each coordinate L-tyrosine. The short motif at 229 to 233 is the 'KMSKS' region element; sequence KFGKS. Residue K232 participates in ATP binding. Positions 350 to 416 constitute an S4 RNA-binding domain; the sequence is ISLLEALVFT…GKRFNALIIF (67 aa).

This sequence belongs to the class-I aminoacyl-tRNA synthetase family. TyrS type 1 subfamily. As to quaternary structure, homodimer.

Its subcellular location is the cytoplasm. The enzyme catalyses tRNA(Tyr) + L-tyrosine + ATP = L-tyrosyl-tRNA(Tyr) + AMP + diphosphate + H(+). Its function is as follows. Catalyzes the attachment of tyrosine to tRNA(Tyr) in a two-step reaction: tyrosine is first activated by ATP to form Tyr-AMP and then transferred to the acceptor end of tRNA(Tyr). This is Tyrosine--tRNA ligase from Phytoplasma mali (strain AT).